A 227-amino-acid polypeptide reads, in one-letter code: Small ribosomal subunit protein uS3 (227 aa).

The KH type-2 domain maps to 39-108 (IRKFVEERYK…DVTVNVDEVK (70 aa)).

This sequence belongs to the universal ribosomal protein uS3 family. In terms of assembly, part of the 30S ribosomal subunit. Forms a tight complex with proteins S10 and S14.

Its function is as follows. Binds the lower part of the 30S subunit head. Binds mRNA in the 70S ribosome, positioning it for translation. The sequence is that of Small ribosomal subunit protein uS3 from Persephonella marina (strain DSM 14350 / EX-H1).